The following is a 142-amino-acid chain: Small ribosomal subunit protein uS9 (142 aa).

This sequence belongs to the universal ribosomal protein uS9 family. As to quaternary structure, component of the small ribosomal subunit. Mature ribosomes consist of a small (40S) and a large (60S) subunit. The 40S subunit contains about 32 different proteins and 1 molecule of RNA (18S). The 60S subunit contains 45 different proteins and 3 molecules of RNA (25S, 5.8S and 5S).

The protein localises to the cytoplasm. Component of the ribosome, a large ribonucleoprotein complex responsible for the synthesis of proteins in the cell. The small ribosomal subunit (SSU) binds messenger RNAs (mRNAs) and translates the encoded message by selecting cognate aminoacyl-transfer RNA (tRNA) molecules. The large subunit (LSU) contains the ribosomal catalytic site termed the peptidyl transferase center (PTC), which catalyzes the formation of peptide bonds, thereby polymerizing the amino acids delivered by tRNAs into a polypeptide chain. The nascent polypeptides leave the ribosome through a tunnel in the LSU and interact with protein factors that function in enzymatic processing, targeting, and the membrane insertion of nascent chains at the exit of the ribosomal tunnel. The chain is Small ribosomal subunit protein uS9 (RPS16A) from Candida albicans (strain SC5314 / ATCC MYA-2876) (Yeast).